The sequence spans 80 residues: Waprin-Phi3 (80 aa).

The first 22 residues, 1–22, serve as a signal peptide directing secretion; that stretch reads MKPWILLLLAGLLILSTQLTTA. The region spanning 31-78 is the WAP domain; it reads PKVKPGECPKVKIPPDYPCNQYCVWDFDCEGNKKCCPVGCAKECFPPG. Cystine bridges form between Cys38–Cys66, Cys49–Cys70, Cys53–Cys65, and Cys59–Cys74.

Belongs to the venom waprin family. As to expression, expressed by the venom gland.

It is found in the secreted. In terms of biological role, damages membranes of susceptible bacteria. Has no hemolytic activity. Not toxic to mice. Does not inhibit the proteinases elastase and cathepsin G. The polypeptide is Waprin-Phi3 (Philodryas olfersii (Green snake)).